The sequence spans 573 residues: 2-succinyl-5-enolpyruvyl-6-hydroxy-3-cyclohexene-1-carboxylate synthase (573 aa).

This sequence belongs to the TPP enzyme family. MenD subfamily. As to quaternary structure, homodimer. Requires Mg(2+) as cofactor. The cofactor is Mn(2+). It depends on thiamine diphosphate as a cofactor.

It carries out the reaction isochorismate + 2-oxoglutarate + H(+) = 5-enolpyruvoyl-6-hydroxy-2-succinyl-cyclohex-3-ene-1-carboxylate + CO2. The protein operates within quinol/quinone metabolism; 1,4-dihydroxy-2-naphthoate biosynthesis; 1,4-dihydroxy-2-naphthoate from chorismate: step 2/7. Its pathway is quinol/quinone metabolism; menaquinone biosynthesis. Catalyzes the thiamine diphosphate-dependent decarboxylation of 2-oxoglutarate and the subsequent addition of the resulting succinic semialdehyde-thiamine pyrophosphate anion to isochorismate to yield 2-succinyl-5-enolpyruvyl-6-hydroxy-3-cyclohexene-1-carboxylate (SEPHCHC). The protein is 2-succinyl-5-enolpyruvyl-6-hydroxy-3-cyclohexene-1-carboxylate synthase of Shewanella sp. (strain ANA-3).